The following is a 413-amino-acid chain: Probable Xaa-Pro aminopeptidase UREG_07123 (413 aa).

Asp194, Asp205, Glu340, and Glu379 together coordinate Mn(2+).

The protein belongs to the peptidase M24B family. It depends on Mn(2+) as a cofactor.

It catalyses the reaction Release of any N-terminal amino acid, including proline, that is linked to proline, even from a dipeptide or tripeptide.. Functionally, catalyzes the removal of a penultimate prolyl residue from the N-termini of peptides. The sequence is that of Probable Xaa-Pro aminopeptidase UREG_07123 from Uncinocarpus reesii (strain UAMH 1704).